The sequence spans 107 residues: Ig kappa chain V-VI region NQ5-78.2.6 (107 aa).

The segment at 1 to 23 (QILLTQSPAIMSASPGQKVTMTC) is framework-1. A disulfide bond links Cys-23 and Cys-87. Residues 24–33 (SASSSVSYMH) form a complementarity-determining-1 region. Residues 34–48 (WYQQKSGTSPKRWIY) are framework-2. Positions 49 to 55 (DTSKLAS) are complementarity-determining-2. Positions 56–87 (GVPARFXGSGSATSYSLTITSMQAEDAATYYC) are framework-3. The interval 88–96 (QQWSSNPLT) is complementarity-determining-3. The interval 97–106 (FGSGTKLEXK) is framework-4.

In terms of biological role, anti-2-phenyl oxazolone (PHOX) Antibody. The sequence is that of Ig kappa chain V-VI region NQ5-78.2.6 from Mus musculus (Mouse).